We begin with the raw amino-acid sequence, 859 residues long: DNA mismatch repair protein MutS (859 aa).

617–624 (GPNMGGKS) is a binding site for ATP. Positions 799–821 (ETTSLPHEQPRAKPGKPAVPQQS) are disordered.

It belongs to the DNA mismatch repair MutS family.

In terms of biological role, this protein is involved in the repair of mismatches in DNA. It is possible that it carries out the mismatch recognition step. This protein has a weak ATPase activity. The sequence is that of DNA mismatch repair protein MutS from Pseudomonas syringae pv. syringae (strain B728a).